The sequence spans 260 residues: Small ribosomal subunit protein uS2 (260 aa).

This sequence belongs to the universal ribosomal protein uS2 family.

The protein is Small ribosomal subunit protein uS2 of Streptococcus gordonii (strain Challis / ATCC 35105 / BCRC 15272 / CH1 / DL1 / V288).